A 225-amino-acid polypeptide reads, in one-letter code: MASLCLSSSRIVSLHHQKPFLSLKLRSRPSDLSGLGRHTSPVCFNPLRLSGDRQRTATVSTRVEKRRKRGSSVVCYAAPISANSLQWISTISCLALMLARGTGIHKSVVVPLFALHAPSSIVAWIKGEYGVWAAFLALIARLFFTFPGELELPFIALLLVIVAPYQVMNIRGKQEGAIIAIAISGFLAFQHFSRAGSLEKAYEKGSVLATVAIIGVTVVSLLLLL.

A chloroplast-targeting transit peptide spans Met1–Tyr76. Position 77 (Ala77) is a topological domain, stromal. Residues Ala78–Leu98 form a helical membrane-spanning segment. The Chloroplast intermembrane portion of the chain corresponds to Ala99–Thr102. Residues Gly103–Ala123 traverse the membrane as a helical segment. Over Trp124 to Glu128 the chain is Stromal. Residues Tyr129–Glu149 traverse the membrane as a helical segment. Residues Leu150–Glu151 are Chloroplast intermembrane-facing. The helical transmembrane segment at Leu152–Gly172 threads the bilayer. At Lys173–Glu175 the chain is on the stromal side. Residues Gly176–Gly196 form a helical membrane-spanning segment. Topologically, residues Ser197–Lys204 are chloroplast intermembrane. The helical transmembrane segment at Gly205 to Leu225 threads the bilayer.

The protein belongs to the Cold-regulated 413 protein family.

It is found in the plastid. The protein resides in the chloroplast inner membrane. The polypeptide is Cold-regulated 413 inner membrane protein 1, chloroplastic (COR413IM1) (Arabidopsis thaliana (Mouse-ear cress)).